The sequence spans 298 residues: ADP-ribosylation factor GTPase-activating protein effector protein 2 (298 aa).

S2 bears the N-acetylserine mark. The Arf-GAP domain maps to 8-130 (KKALSALLRD…KWIGDLSSIE (123 aa)). A C4-type zinc finger spans residues 23 to 47 (CADCKAQLHPRWASWSLGVFICIKC). A disordered region spans residues 137 to 180 (EPVLHKPSANHSLPASNARLDQSSNSLQKTQTQPPSHLLSTSRS). Polar residues predominate over residues 145–171 (ANHSLPASNARLDQSSNSLQKTQTQPP). Phosphoserine occurs at positions 180, 183, and 207.

Its subcellular location is the cytoplasm. It localises to the golgi apparatus. GTPase-activating protein for the ADP ribosylation factor family. In Saccharomyces cerevisiae (strain ATCC 204508 / S288c) (Baker's yeast), this protein is ADP-ribosylation factor GTPase-activating protein effector protein 2 (AGE2).